We begin with the raw amino-acid sequence, 471 residues long: Tigger transposable element-derived protein 3 (471 aa).

In terms of domain architecture, HTH psq-type spans Leu3–Leu55. DNA-binding regions (H-T-H motif) lie at residues Gln31–Asn51 and Pro100–Arg130. The HTH CENPB-type domain occupies Glu67–Ala137. Positions Phe167–Phe360 constitute a DDE-1 domain.

It belongs to the tigger transposable element derived protein family.

Its subcellular location is the nucleus. This chain is Tigger transposable element-derived protein 3 (TIGD3), found in Homo sapiens (Human).